We begin with the raw amino-acid sequence, 602 residues long: Aspartate--tRNA(Asp/Asn) ligase (602 aa).

Glu175 is an L-aspartate binding site. The segment at 199-202 (QIFK) is aspartate. Residue Arg221 participates in L-aspartate binding. ATP contacts are provided by residues 221-223 (RDE) and Gln230. His458 serves as a coordination point for L-aspartate. Glu492 provides a ligand contact to ATP. Residue Arg499 coordinates L-aspartate. ATP is bound at residue 544–547 (GLDR).

This sequence belongs to the class-II aminoacyl-tRNA synthetase family. Type 1 subfamily. As to quaternary structure, homodimer.

It is found in the cytoplasm. It catalyses the reaction tRNA(Asx) + L-aspartate + ATP = L-aspartyl-tRNA(Asx) + AMP + diphosphate. Functionally, aspartyl-tRNA synthetase with relaxed tRNA specificity since it is able to aspartylate not only its cognate tRNA(Asp) but also tRNA(Asn). Reaction proceeds in two steps: L-aspartate is first activated by ATP to form Asp-AMP and then transferred to the acceptor end of tRNA(Asp/Asn). The sequence is that of Aspartate--tRNA(Asp/Asn) ligase from Cupriavidus taiwanensis (strain DSM 17343 / BCRC 17206 / CCUG 44338 / CIP 107171 / LMG 19424 / R1) (Ralstonia taiwanensis (strain LMG 19424)).